Here is a 904-residue protein sequence, read N- to C-terminus: Toll-like receptor 3 (904 aa).

Positions 1–23 (MRQTLPCIYFWGGLLPFGMLCAS) are cleaved as a signal peptide. One can recognise an LRRNT domain in the interval 24 to 51 (STTKCTVSHEVADCSHLKLTQVPDDLPT). The Lumenal portion of the chain corresponds to 24 to 704 (STTKCTVSHE…SCKDSAPFEL (681 aa)). Cys-28 and Cys-37 are disulfide-bonded. N-linked (GlcNAc...) asparagine glycans are attached at residues Asn-52, Asn-57, and Asn-70. LRR repeat units lie at residues 52 to 73 (NITV…NFTR), 76 to 97 (QLTS…LCQK), 100 to 121 (MLKV…TFAF), 124 to 145 (NLTE…PFVK), 148 to 168 (NLIT…GTQV), and 172 to 193 (NLQE…ELDI). Residues Cys-95 and Cys-122 are joined by a disulfide bond. Asn-124 carries an N-linked (GlcNAc...) asparagine glycan. N-linked (GlcNAc...) asparagine glycosylation is present at Asn-196. LRR repeat units follow at residues 198–219 (SLKK…CFHA) and 222–244 (RLFG…LCLE). Asn-247, Asn-252, Asn-265, Asn-275, and Asn-291 each carry an N-linked (GlcNAc...) asparagine glycan. LRR repeat units lie at residues 249-270 (SIRN…TFLG), 275-296 (NLTM…SFAW), 299-320 (QLEY…SLHG), 323-344 (NVRY…ASLP), 356-377 (CLEH…MFTG), 380-400 (NLKY…TNET), 408-429 (PLHI…AFSW), 432-454 (HLEV…EWRG), 465-486 (YNKY…QRLM), 507-528 (NLTI…MLEG), 531-552 (KLEI…ANPG), 563-584 (HLHI…VFKD), 587-608 (ELKI…VFNN), and 611-632 (SLKS…VFGP). Residues Asn-398 and Asn-413 are each glycosylated (N-linked (GlcNAc...) asparagine). A glycan (N-linked (GlcNAc...) asparagine) is linked at Asn-507. N-linked (GlcNAc...) asparagine glycans are attached at residues Asn-636 and Asn-662. Residues 645-698 (NPFDCTCESIAWFVNWINETHTNIPELSSHYLCNTPPHYHGFPVRLFDTSSCKD) enclose the LRRCT domain. 2 cysteine pairs are disulfide-bonded: Cys-649-Cys-677 and Cys-651-Cys-696. The helical transmembrane segment at 705–725 (FFMINTSILLIFIFIVLLIHF) threads the bilayer. At 726–904 (EGWRISFYWN…VALGSKNSVH (179 aa)) the chain is on the cytoplasmic side. Positions 754–897 (FEYAAYIIHA…AFRHKLQVAL (144 aa)) constitute a TIR domain. Tyr-759 carries the phosphotyrosine modification. Glycyl lysine isopeptide (Lys-Gly) (interchain with G-Cter in ubiquitin) cross-links involve residues Lys-765, Lys-812, and Lys-831. Tyr-858 carries the phosphotyrosine modification.

Belongs to the Toll-like receptor family. Monomer and homodimer; dimerization is triggered by ligand-binding, the signaling unit is composed of one ds-RNA of around 40 bp and two TLR3 molecules, and lateral clustering of signaling units along the length of the ds-RNA ligand is required for TLR3 signal transduction. Interacts (via transmembrane domain) with UNC93B1; the interaction is required for transport from the ER to the endosomes. Interacts with SRC; upon binding of double-stranded RNA. Interacts with TICAM1 (via the TIR domain) in response to poly(I:C) and this interaction is enhanced in the presence of WDFY1. The tyrosine-phosphorylated form (via TIR domain) interacts with WDFY1 (via WD repeat 2) in response to poly(I:C). In terms of processing, heavily N-glycosylated, except on that part of the surface of the ectodomain that is involved in ligand binding. TLR3 signaling requires a proteolytic cleavage mediated by cathepsins CTSB and CTSH, the cleavage occurs between amino acids 252 and 346. The cleaved form of TLR3 is the predominant form found in endosomes. Post-translationally, ubiquitinated by TRIM3; leading to recognition and sorting of polyubiquitinated TLR3 by the ESCRT complexes. Ubiquitinated by ZNRF1 via 'Lys-63'-linked ubiquitin chains; leading to TLR3 lysosomal trafficking and degradation. Ubiquitinated by RNF170 at Lys-765 via 'Lys-48'-linked ubiquitin chains; leading to TLR3 proteasomal degradation. In terms of tissue distribution, expressed at high level in placenta and pancreas. Also detected in CD11c+ immature dendritic cells. Only expressed in dendritic cells and not in other leukocytes, including monocyte precursors. TLR3 is the TLR that is expressed most strongly in the brain, especially in astrocytes, glia, and neurons.

The protein localises to the endoplasmic reticulum membrane. It is found in the endosome membrane. The protein resides in the early endosome. Key component of innate and adaptive immunity. TLRs (Toll-like receptors) control host immune response against pathogens through recognition of molecular patterns specific to microorganisms. TLR3 is a nucleotide-sensing TLR which is activated by double-stranded RNA, a sign of viral infection. Acts via the adapter TRIF/TICAM1, leading to NF-kappa-B activation, IRF3 nuclear translocation, cytokine secretion and the inflammatory response. This chain is Toll-like receptor 3, found in Homo sapiens (Human).